A 682-amino-acid polypeptide reads, in one-letter code: DNA ligase (682 aa).

NAD(+) contacts are provided by residues 42–46 (DAEYD), 91–92 (SL), and Glu124. Lys126 serves as the catalytic N6-AMP-lysine intermediate. Arg147, Glu184, Lys302, and Lys326 together coordinate NAD(+). Cys420, Cys423, Cys438, and Cys444 together coordinate Zn(2+). A BRCT domain is found at 603–682 (IADNPLKGKS…QEFIALTGEN (80 aa)).

This sequence belongs to the NAD-dependent DNA ligase family. LigA subfamily. Mg(2+) serves as cofactor. The cofactor is Mn(2+).

The enzyme catalyses NAD(+) + (deoxyribonucleotide)n-3'-hydroxyl + 5'-phospho-(deoxyribonucleotide)m = (deoxyribonucleotide)n+m + AMP + beta-nicotinamide D-nucleotide.. DNA ligase that catalyzes the formation of phosphodiester linkages between 5'-phosphoryl and 3'-hydroxyl groups in double-stranded DNA using NAD as a coenzyme and as the energy source for the reaction. It is essential for DNA replication and repair of damaged DNA. In Actinobacillus pleuropneumoniae serotype 7 (strain AP76), this protein is DNA ligase.